The sequence spans 276 residues: MAKQARAVQTWRSIVDAAASVFDDYGYERAAISEILRRAKVTKGALYFHFASKEAIAQAIMDEQTSTVEFEQEGSPLQSLVDGGQQFAFALRHNSMARAGTRLSIEGVFLGGPHPWGDWIDATARMLELGQERGEVFPQIDPMVSAKIIVASFTGIQLVSEADSGRADLRGQVAEMWRHILPSIAHPGVIAHIKPEGRVDLAAQAREKAEREEQEARIAAEAKGAGSDAATDSGSRSGGSGLRGGGSGRGPRAGGAGDEGDEEPAGAGVAAGGVVA.

The 61-residue stretch at 8-68 (VQTWRSIVDA…AIMDEQTSTV (61 aa)) folds into the HTH tetR-type domain. Positions 31–50 (AISEILRRAKVTKGALYFHF) form a DNA-binding region, H-T-H motif. Residues 207-220 (EKAEREEQEARIAA) are compositionally biased toward basic and acidic residues. Residues 207-276 (EKAEREEQEA…AGVAAGGVVA (70 aa)) are disordered. Low complexity predominate over residues 221–235 (EAKGAGSDAATDSGS). Positions 236–257 (RSGGSGLRGGGSGRGPRAGGAG) are enriched in gly residues.

Homodimer or multimer. Binds to both DNA and A-factor as a homodimer.

Its subcellular location is the cytoplasm. Functionally, represses adpA expression by binding to the promoter region in the absence of A-factor, causing repression of streptomycin production and of sporulation. This Streptomyces griseus protein is A-factor receptor protein (arpA).